The chain runs to 220 residues: Large ribosomal subunit protein uL3 (220 aa).

It belongs to the universal ribosomal protein uL3 family. Part of the 50S ribosomal subunit. Forms a cluster with proteins L14 and L19.

Its function is as follows. One of the primary rRNA binding proteins, it binds directly near the 3'-end of the 23S rRNA, where it nucleates assembly of the 50S subunit. The polypeptide is Large ribosomal subunit protein uL3 (Staphylococcus haemolyticus (strain JCSC1435)).